The primary structure comprises 174 residues: ATP synthase subunit b, organellar chromatophore (174 aa).

The helical transmembrane segment at 26 to 46 (LINLIIVIGVLFTFLRGFLGE) threads the bilayer.

The protein belongs to the ATPase B chain family. F-type ATPases have 2 components, F(1) - the catalytic core - and F(0) - the membrane proton channel. F(1) has five subunits: alpha(3), beta(3), gamma(1), delta(1), epsilon(1). F(0) has four main subunits: a(1), b(1), b'(1) and c(10-14). The alpha and beta chains form an alternating ring which encloses part of the gamma chain. F(1) is attached to F(0) by a central stalk formed by the gamma and epsilon chains, while a peripheral stalk is formed by the delta, b and b' chains.

Its subcellular location is the plastid. It is found in the organellar chromatophore thylakoid membrane. Its function is as follows. F(1)F(0) ATP synthase produces ATP from ADP in the presence of a proton or sodium gradient. F-type ATPases consist of two structural domains, F(1) containing the extramembraneous catalytic core and F(0) containing the membrane proton channel, linked together by a central stalk and a peripheral stalk. During catalysis, ATP synthesis in the catalytic domain of F(1) is coupled via a rotary mechanism of the central stalk subunits to proton translocation. Component of the F(0) channel, it forms part of the peripheral stalk, linking F(1) to F(0). The protein is ATP synthase subunit b, organellar chromatophore of Paulinella chromatophora.